The primary structure comprises 334 residues: Small ribosomal subunit protein uS2 (334 aa).

The protein belongs to the universal ribosomal protein uS2 family.

This Xanthobacter autotrophicus (strain ATCC BAA-1158 / Py2) protein is Small ribosomal subunit protein uS2.